Here is a 353-residue protein sequence, read N- to C-terminus: MRTSDFKFQLPKKLISRYPNLKRSECRLLVFDRLTTKITHHFFSDLPEILNPGDLLIFNDTRVIPARLYGYSVTGKKVEILIERILNDYQAVAHIYSSELVQLGEKFILGSNLNIYIYVIKIYYSYKLFKIYFDNINYNNVLSLLNDIGHIPIPPYFHRLDEIIDYELYQTVYGSKLGSIAAPTAGLHFDTLLINRLLNLGIEISFITLHIGSATFQPVRVTLIEHHVMHDEYIEVSQSTIESILRCKERKNRVIAVGTTVVKALETAAMNTKSLSIIESFSGYSRIFIFPGYRFKIVDSLITNFHLPESTLIMLVAAFAGYRNILRVYNAAIDLNYKFLSYGDSMFITCRSE.

Belongs to the QueA family. As to quaternary structure, monomer.

It localises to the cytoplasm. It catalyses the reaction 7-aminomethyl-7-carbaguanosine(34) in tRNA + S-adenosyl-L-methionine = epoxyqueuosine(34) in tRNA + adenine + L-methionine + 2 H(+). It participates in tRNA modification; tRNA-queuosine biosynthesis. In terms of biological role, transfers and isomerizes the ribose moiety from AdoMet to the 7-aminomethyl group of 7-deazaguanine (preQ1-tRNA) to give epoxyqueuosine (oQ-tRNA). In Blochmanniella floridana, this protein is S-adenosylmethionine:tRNA ribosyltransferase-isomerase.